We begin with the raw amino-acid sequence, 1365 residues long: Nuclear pore complex protein Nup154 (1365 aa).

Residues M1–M508 are required for binding to Nup93-1 and anchoring to the nuclear pore complex. A required for binding to chromatin region spans residues M508 to A986.

This sequence belongs to the non-repetitive/WGA-negative nucleoporin family. Interacts (via N-terminus) with Nup93-1. Interacts with Nup35. Interacts with cup.

The protein localises to the nucleus. Its subcellular location is the nuclear pore complex. It localises to the chromosome. The protein resides in the nucleus membrane. It is found in the cytoplasm. In terms of biological role, component of the nuclear pore complex. Has a role in the organization of the inner nuclear membrane proteins at the nuclear envelope. In germ cells, plays a role in the nuclear localization of components of the dpp signaling pathways, such as Medea and phosphorylated Mad. Binds to chromatin, and together with Nup62 and Nup93-1, contributes to karyosome morphology and chromatin organization including attachment to the nuclear envelope in oocytes and nurse cells. Has a role in female fertility including egg chamber development; in nurse cells, has a role in the organization of F-actin in subcortical and cytoplasmic actin filaments important for the transfer of cytoplasm from nurse cells to the growing oocytes. Has a role in male spermatogenesis and fertility. Has a role in germ line cell proliferation. The protein is Nuclear pore complex protein Nup154 of Drosophila melanogaster (Fruit fly).